A 388-amino-acid polypeptide reads, in one-letter code: MRYLTAGESHGPGLTTIIEGLPAGMPLLAEDVNKELKRRQGGHGRGARMRIEKDQVQITAGIRHGKTLGAPVAMFVENKDWKHWETVMSIEPVPEKNEKSRRVSRPRPGHADLVGGMKYGHNDMRNVLERSSARETTVRVAAGAVAKKLLHELGIEVAGHVLEIGGTRANLTRDYAVREIQETSEASPVRCLDGVAAEEMMQKIDDAKKNGDTIGGIVEVVVGGVPAGLGSYVQWDKKLDAKIARAIVSINAFKGAEFGVGFEAARKPGSEVMDEILWSKEDGYTRRTNNLGGFEGGMTNGMPIVVRGVMKPIPTLYKPLQSVDIDSKETFNASVERSDSCAVPAASVVAEAVVAWEVAVAVLEKFDGDRFDTLKKHVEEHRNLTKEF.

NADP(+) contacts are provided by arginine 39 and arginine 45. Residues 95-118 (EKNEKSRRVSRPRPGHADLVGGMK) are disordered. Residues 130-132 (RSS), 251-252 (NA), glycine 296, 311-315 (KPIPT), and arginine 337 each bind FMN.

This sequence belongs to the chorismate synthase family. In terms of assembly, homotetramer. It depends on FMNH2 as a cofactor.

It catalyses the reaction 5-O-(1-carboxyvinyl)-3-phosphoshikimate = chorismate + phosphate. The protein operates within metabolic intermediate biosynthesis; chorismate biosynthesis; chorismate from D-erythrose 4-phosphate and phosphoenolpyruvate: step 7/7. In terms of biological role, catalyzes the anti-1,4-elimination of the C-3 phosphate and the C-6 proR hydrogen from 5-enolpyruvylshikimate-3-phosphate (EPSP) to yield chorismate, which is the branch point compound that serves as the starting substrate for the three terminal pathways of aromatic amino acid biosynthesis. This reaction introduces a second double bond into the aromatic ring system. The chain is Chorismate synthase from Listeria monocytogenes serotype 4b (strain CLIP80459).